The primary structure comprises 474 residues: Adenosylhomocysteinase (474 aa).

The substrate site is built by Thr-61, Asp-136, and Glu-196. Residue 197–199 participates in NAD(+) binding; sequence TTT. Residues Lys-226 and Asp-230 each coordinate substrate. Residues Asn-231, 260-265, Glu-283, Asn-318, 339-341, and Asn-384 contribute to the NAD(+) site; these read GYGDVG and IGH.

The protein belongs to the adenosylhomocysteinase family. NAD(+) is required as a cofactor.

It localises to the cytoplasm. The catalysed reaction is S-adenosyl-L-homocysteine + H2O = L-homocysteine + adenosine. It functions in the pathway amino-acid biosynthesis; L-homocysteine biosynthesis; L-homocysteine from S-adenosyl-L-homocysteine: step 1/1. May play a key role in the regulation of the intracellular concentration of adenosylhomocysteine. This is Adenosylhomocysteinase from Ralstonia pickettii (strain 12J).